The sequence spans 377 residues: MSRGIIIIGSGFAARQLVKNIRKQDAHVPLTLIAADSMDEYNKPDLSHVISQSQRADDLTRQLAGEFAEQFNLRLFPHTWVADIDADAHVVKSQDKQWQYDKLVLATGAAAFVPPVAGRELMLTLNSQQEYRACETQLRAAQRVLIVGGGLIGSELAMDFCRAGKTVTLMDNAASLLASLMPPEVSSRLQHRLTDMGVHLQLKSQLQELEKSEAGIRATLASQRRIEVDAAIAATGLRPETALARRAGLVINHGVCVDSYLQTSHPDIYAIGDCAEINGQVLPFLQPIQLSAMYLAKNLLGGKAPLKLPAMLVKVKTPELPLYLAGETQRRDLSWHITAESDGMIAKGMSGEGQLRAFVASEDRMKEAFALLKMLPV.

This sequence belongs to the FAD-dependent oxidoreductase family. It depends on FAD as a cofactor.

It localises to the cytoplasm. It carries out the reaction 2 reduced [nitric oxide reductase rubredoxin domain] + NAD(+) + H(+) = 2 oxidized [nitric oxide reductase rubredoxin domain] + NADH. The protein operates within nitrogen metabolism; nitric oxide reduction. Its function is as follows. One of at least two accessory proteins for anaerobic nitric oxide (NO) reductase. Reduces the rubredoxin moiety of NO reductase. The chain is Nitric oxide reductase FlRd-NAD(+) reductase from Salmonella arizonae (strain ATCC BAA-731 / CDC346-86 / RSK2980).